A 276-amino-acid chain; its full sequence is Dermonecrotic toxin LvSicTox-alphaII1 (276 aa).

Residue His5 is part of the active site. The Mg(2+) site is built by Glu25 and Asp27. The Nucleophile role is filled by His41. Intrachain disulfides connect Cys45–Cys51 and Cys47–Cys193. Residue Asp85 coordinates Mg(2+).

This sequence belongs to the arthropod phospholipase D family. Class II subfamily. Mg(2+) is required as a cofactor. Expressed by the venom gland.

The protein localises to the secreted. The catalysed reaction is an N-(acyl)-sphingosylphosphocholine = an N-(acyl)-sphingosyl-1,3-cyclic phosphate + choline. The enzyme catalyses an N-(acyl)-sphingosylphosphoethanolamine = an N-(acyl)-sphingosyl-1,3-cyclic phosphate + ethanolamine. It catalyses the reaction a 1-acyl-sn-glycero-3-phosphocholine = a 1-acyl-sn-glycero-2,3-cyclic phosphate + choline. It carries out the reaction a 1-acyl-sn-glycero-3-phosphoethanolamine = a 1-acyl-sn-glycero-2,3-cyclic phosphate + ethanolamine. Its function is as follows. Dermonecrotic toxins cleave the phosphodiester linkage between the phosphate and headgroup of certain phospholipids (sphingolipid and lysolipid substrates), forming an alcohol (often choline) and a cyclic phosphate. This toxin acts on sphingomyelin (SM). It may also act on ceramide phosphoethanolamine (CPE), lysophosphatidylcholine (LPC) and lysophosphatidylethanolamine (LPE), but not on lysophosphatidylserine (LPS), and lysophosphatidylglycerol (LPG). It acts by transphosphatidylation, releasing exclusively cyclic phosphate products as second products. Induces dermonecrosis, hemolysis, increased vascular permeability, edema, inflammatory response, and platelet aggregation. In Loxosceles variegata (Recluse spider), this protein is Dermonecrotic toxin LvSicTox-alphaII1.